We begin with the raw amino-acid sequence, 268 residues long: Fibroblast growth factor 8 (268 aa).

An N-terminal signal peptide occupies residues 1 to 22 (MGSPRSALSCLLLHLLVLCLQA). Q23 carries the pyrrolidone carboxylic acid modification. A disordered region spans residues 29–87 (QKRGPGAGNPADTLGQGHEDRPFGQRSRAGKNFTNPAPNYPEEGSKEQRDSVLPKVTQR). N60 carries N-linked (GlcNAc...) asparagine glycosylation. The segment covering 71 to 80 (EGSKEQRDSV) has biased composition (basic and acidic residues). N190 carries N-linked (GlcNAc...) asparagine glycosylation.

Belongs to the heparin-binding growth factors family. Monomer. Homodimer. Interacts with FGFR1, FGFR2, FGFR3 and FGFR4. Affinity between fibroblast growth factors (FGFs) and their receptors is increased by heparan sulfate glycosaminoglycans that function as coreceptors. In terms of processing, the N-terminus is blocked. As to expression, absent in normal mammary glands and detected only in adult testis and ovary and in midgestational embryos.

The protein resides in the secreted. In terms of biological role, plays an important role in the regulation of embryonic development, cell proliferation, cell differentiation and cell migration. Required for normal brain, eye, ear and limb development during embryogenesis. Required for normal development of the gonadotropin-releasing hormone (GnRH) neuronal system. Plays a role in neurite outgrowth in hippocampal cells. Cooperates with Wnt-1 in mouse mammary tumor virus-induced murine mammary tumorigenesis. In Mus musculus (Mouse), this protein is Fibroblast growth factor 8 (Fgf8).